Reading from the N-terminus, the 520-residue chain is Transactivator/viroplasmin protein (520 aa).

The interval 487 to 520 (QDASADSGPKDGPPPTRSIVEKEDVPTTSSKQVD) is disordered.

This sequence belongs to the caulimoviridae viroplasmin family.

It is found in the host cytoplasm. In terms of biological role, enhances the ribosomal termination-reinitiation event leading to the translation of major open reading frames on the polycistronic viral RNAs. This Cauliflower mosaic virus (strain CM-1841) (CaMV) protein is Transactivator/viroplasmin protein.